Here is a 231-residue protein sequence, read N- to C-terminus: MKRAVVVFSGGQDSTTCLVQALQQYDEVHCVTFDYGQQHRAEIDVARELALKLGARAHKVLDVTLLNELAVSSLTRDSIPVPDYEPEADGIPNTFVPGRNILFLTLAAIYAYQVKAEAVITGVCETDFSGYPDCRDEFVKALNHAVSLGMAKDIRFETPLMWIDKAETWALADYYGKLDLVRNETLTCYNGIKGDGCGHCAACNLRANGLNHYLADKPTVMAAMKQKTGLR.

8–18 lines the ATP pocket; that stretch reads FSGGQDSTTCL. Residues cysteine 188, cysteine 197, cysteine 200, and cysteine 203 each contribute to the Zn(2+) site.

The protein belongs to the QueC family. The cofactor is Zn(2+).

It carries out the reaction 7-carboxy-7-deazaguanine + NH4(+) + ATP = 7-cyano-7-deazaguanine + ADP + phosphate + H2O + H(+). It functions in the pathway purine metabolism; 7-cyano-7-deazaguanine biosynthesis. In terms of biological role, catalyzes the ATP-dependent conversion of 7-carboxy-7-deazaguanine (CDG) to 7-cyano-7-deazaguanine (preQ(0)). The sequence is that of 7-cyano-7-deazaguanine synthase from Shigella flexneri serotype 5b (strain 8401).